Consider the following 317-residue polypeptide: Heme A synthase (317 aa).

At 1-6 the chain is on the cytoplasmic side; the sequence is MQRSLK. Residues 7–27 form a helical membrane-spanning segment; it reads WFASATTLAMLFVLIGGALVT. The Extracellular portion of the chain corresponds to 28 to 62; the sequence is KTGSGMGCGRSWPLCNGQWVPDHITPELIIELSHR. A disulfide bond links C35 and C42. Residue E58 is part of the active site. Position 61 (H61) interacts with heme o. Residues 63–83 traverse the membrane as a helical segment; the sequence is LVSGLAGIMVLILSIWAWRAI. At 84 to 90 the chain is on the cytoplasmic side; that stretch reads GHVQETK. The helical transmembrane segment at 91–111 threads the bilayer; it reads FLAVISFVFLVLQGLIGAAAV. Over 112-121 the chain is Extracellular; the sequence is VWGQSDFVLA. A helical transmembrane segment spans residues 122–142; the sequence is LHFGISLISFAAVLLLTLLIF. Residue H123 participates in heme o binding. Residues 143–159 are Cytoplasmic-facing; the sequence is EIDKTFSAASLSLDGKM. The helical transmembrane segment at 160 to 180 threads the bilayer; that stretch reads RFHIYGITIYSYIVVYTGALV. The Extracellular portion of the chain corresponds to 181 to 211; the sequence is RHTNASLACPSWPLCAKTRLLPVQFHEWVQM. Cysteines 189 and 195 form a disulfide. The helical transmembrane segment at 212-232 threads the bilayer; it reads GHRLAAAVIIIWIAAAAIHAV. A heme b-binding site is contributed by H213. Over 233-243 the chain is Cytoplasmic; it reads RHYRRQPVIYY. Residues 244–264 form a helical membrane-spanning segment; sequence GWLIALLLVLAQMTTGALVVF. Residues 265–270 are Extracellular-facing; the sequence is TQLNLY. Residues 271–291 form a helical membrane-spanning segment; it reads IALAHAFFISCLFGVLSYLLL. Position 275 (H275) interacts with heme b. The Cytoplasmic segment spans residues 292–317; that stretch reads LALRTRRAPVKAADHSAGEAAPATLK.

This sequence belongs to the COX15/CtaA family. Type 1 subfamily. In terms of assembly, interacts with CtaB. Requires heme b as cofactor.

The protein localises to the cell membrane. The catalysed reaction is Fe(II)-heme o + 2 A + H2O = Fe(II)-heme a + 2 AH2. Its pathway is porphyrin-containing compound metabolism; heme A biosynthesis; heme A from heme O: step 1/1. Catalyzes the conversion of heme O to heme A by two successive hydroxylations of the methyl group at C8. The first hydroxylation forms heme I, the second hydroxylation results in an unstable dihydroxymethyl group, which spontaneously dehydrates, resulting in the formyl group of heme A. This chain is Heme A synthase, found in Geobacillus kaustophilus (strain HTA426).